The chain runs to 223 residues: NLP effector protein 3 (223 aa).

The Conserved undecapeptide motif signature appears at 90–100 (AIMYVWYFPKD). The Conserved heptapeptide motif signature appears at 107-113 (GHRHDWE).

Belongs to the Necrosis inducing protein (NPP1) family.

Its subcellular location is the secreted. It is found in the host cytoplasm. Functionally, probable secreted effector that may act as a pathogen-associated molecular pattern (PAMP) recognized by the plant immune system. Seems not to induce necrosis, neither in several susceptible or resistant Vitis species nor in the dicot model plant Nicotiana benthamiana. The polypeptide is NLP effector protein 3 (Plasmopara viticola (Downy mildew of grapevine)).